Reading from the N-terminus, the 231-residue chain is 5'-methylthioadenosine/S-adenosylhomocysteine nucleosidase (231 aa).

Catalysis depends on Glu12, which acts as the Proton acceptor. Substrate is bound by residues Gly78, Val153, and 174–175; that span reads ME. Catalysis depends on Asp198, which acts as the Proton donor.

It belongs to the PNP/UDP phosphorylase family. MtnN subfamily.

It carries out the reaction S-adenosyl-L-homocysteine + H2O = S-(5-deoxy-D-ribos-5-yl)-L-homocysteine + adenine. It catalyses the reaction S-methyl-5'-thioadenosine + H2O = 5-(methylsulfanyl)-D-ribose + adenine. The catalysed reaction is 5'-deoxyadenosine + H2O = 5-deoxy-D-ribose + adenine. It functions in the pathway amino-acid biosynthesis; L-methionine biosynthesis via salvage pathway; S-methyl-5-thio-alpha-D-ribose 1-phosphate from S-methyl-5'-thioadenosine (hydrolase route): step 1/2. In terms of biological role, catalyzes the irreversible cleavage of the glycosidic bond in both 5'-methylthioadenosine (MTA) and S-adenosylhomocysteine (SAH/AdoHcy) to adenine and the corresponding thioribose, 5'-methylthioribose and S-ribosylhomocysteine, respectively. Also cleaves 5'-deoxyadenosine, a toxic by-product of radical S-adenosylmethionine (SAM) enzymes, into 5-deoxyribose and adenine. The chain is 5'-methylthioadenosine/S-adenosylhomocysteine nucleosidase from Vibrio cholerae serotype O1 (strain ATCC 39315 / El Tor Inaba N16961).